The following is a 71-amino-acid chain: Sec-independent protein translocase protein TatA (71 aa).

The chain crosses the membrane as a helical span at residues 1–21 (MGSFSLLHWLVVLVIVLLVFG). Positions 43 to 71 (LHEDDKPTDQLGSTSQSTASGPQQDHGKH) are disordered. The segment covering 52 to 65 (QLGSTSQSTASGPQ) has biased composition (polar residues).

It belongs to the TatA/E family. In terms of assembly, the Tat system comprises two distinct complexes: a TatABC complex, containing multiple copies of TatA, TatB and TatC subunits, and a separate TatA complex, containing only TatA subunits. Substrates initially bind to the TatABC complex, which probably triggers association of the separate TatA complex to form the active translocon.

The protein localises to the cell inner membrane. In terms of biological role, part of the twin-arginine translocation (Tat) system that transports large folded proteins containing a characteristic twin-arginine motif in their signal peptide across membranes. TatA could form the protein-conducting channel of the Tat system. The sequence is that of Sec-independent protein translocase protein TatA from Xylella fastidiosa (strain M12).